A 485-amino-acid chain; its full sequence is Glutamate--tRNA ligase (485 aa).

A 'HIGH' region motif is present at residues 11–21; it reads PSPTGYMHVGN. Residues C108, C110, C135, and D137 each coordinate Zn(2+). The 'KMSKS' region motif lies at 252–256; sequence KLSKR. Residue K255 coordinates ATP.

The protein belongs to the class-I aminoacyl-tRNA synthetase family. Glutamate--tRNA ligase type 1 subfamily. As to quaternary structure, monomer. Requires Zn(2+) as cofactor.

It is found in the cytoplasm. The enzyme catalyses tRNA(Glu) + L-glutamate + ATP = L-glutamyl-tRNA(Glu) + AMP + diphosphate. In terms of biological role, catalyzes the attachment of glutamate to tRNA(Glu) in a two-step reaction: glutamate is first activated by ATP to form Glu-AMP and then transferred to the acceptor end of tRNA(Glu). This is Glutamate--tRNA ligase from Clostridium botulinum (strain Loch Maree / Type A3).